The primary structure comprises 428 residues: Elongation factor 1-alpha (428 aa).

The region spanning 5 to 215 (KPHVNIVFIG…ALDQIPEPPK (211 aa)) is the tr-type G domain. A G1 region spans residues 14–21 (GHVDHGKS). Position 14–21 (14–21 (GHVDHGKS)) interacts with GTP. Ser-21 is a binding site for Mg(2+). A G2 region spans residues 68–72 (GITID). A G3 region spans residues 89–92 (DAPG). Residues 89 to 93 (DAPGH) and 144 to 147 (NKMD) contribute to the GTP site. Positions 144-147 (NKMD) are G4. Residues 181–183 (SAW) form a G5 region.

It belongs to the TRAFAC class translation factor GTPase superfamily. Classic translation factor GTPase family. EF-Tu/EF-1A subfamily.

It localises to the cytoplasm. It catalyses the reaction GTP + H2O = GDP + phosphate + H(+). In terms of biological role, GTP hydrolase that promotes the GTP-dependent binding of aminoacyl-tRNA to the A-site of ribosomes during protein biosynthesis. The polypeptide is Elongation factor 1-alpha (Thermococcus kodakarensis (strain ATCC BAA-918 / JCM 12380 / KOD1) (Pyrococcus kodakaraensis (strain KOD1))).